The primary structure comprises 416 residues: UDP-N-acetylmuramoylalanine--D-glutamate ligase (416 aa).

104–110 serves as a coordination point for ATP; sequence GSNGKST.

This sequence belongs to the MurCDEF family.

The protein resides in the cytoplasm. The enzyme catalyses UDP-N-acetyl-alpha-D-muramoyl-L-alanine + D-glutamate + ATP = UDP-N-acetyl-alpha-D-muramoyl-L-alanyl-D-glutamate + ADP + phosphate + H(+). The protein operates within cell wall biogenesis; peptidoglycan biosynthesis. Functionally, cell wall formation. Catalyzes the addition of glutamate to the nucleotide precursor UDP-N-acetylmuramoyl-L-alanine (UMA). This is UDP-N-acetylmuramoylalanine--D-glutamate ligase from Francisella tularensis subsp. tularensis (strain WY96-3418).